The following is a 319-amino-acid chain: Taste receptor type 2 member 30 (319 aa).

Position 1 (methionine 1) is a topological domain, extracellular. Residues 2-22 form a helical membrane-spanning segment; it reads ITFLPIIFSILIVVIFVIGNF. Residues 23–46 are Cytoplasmic-facing; it reads ANGFIALVNSIEWVKRQKISFADQ. The chain crosses the membrane as a helical span at residues 47 to 67; the sequence is ILIALAVSRVGLLWALLLHWY. Residues 68 to 86 are Extracellular-facing; the sequence is ATELNLAFYSVEVRITAYN. A helical transmembrane segment spans residues 87–107; it reads VWAVTNHFSNWLATSLSMFYL. The Cytoplasmic segment spans residues 108 to 126; that stretch reads LKIANFSNLIFLRIKRRVK. The chain crosses the membrane as a helical span at residues 127 to 147; the sequence is SVILVILLGPLLFLVCHLFVI. Residues 148–178 are Extracellular-facing; the sequence is NMNEIVWTKEYEGNLTWKIKLRNAVFLSNMT. 2 N-linked (GlcNAc...) asparagine glycosylation sites follow: asparagine 161 and asparagine 176. A helical transmembrane segment spans residues 179–199; sequence LTMLANFVPLTLTLISFLLLI. The Cytoplasmic segment spans residues 200 to 229; it reads CSLCKHLKKMQLHGKGSQDPSTKVHIKALQ. Residues 230–250 traverse the membrane as a helical segment; the sequence is TVTCFLLLCAIYFLSMIISVY. Topologically, residues 251-259 are extracellular; the sequence is NFGRLEKKP. Residues 260–280 traverse the membrane as a helical segment; it reads VFMFCQAITFSYPSTHAFILI. Residues 281 to 319 lie on the Cytoplasmic side of the membrane; it reads WGNKKLKQIFLSVLWHVRYWVKDRSLRLHRFTRAALCKG.

The protein belongs to the G-protein coupled receptor T2R family.

The protein resides in the membrane. In terms of biological role, receptor that may play a role in the perception of bitterness and is gustducin-linked. May play a role in sensing the chemical composition of the gastrointestinal content. The activity of this receptor may stimulate alpha gustducin, mediate PLC-beta-2 activation and lead to the gating of TRPM5. The polypeptide is Taste receptor type 2 member 30 (TAS2R30) (Pongo pygmaeus (Bornean orangutan)).